The sequence spans 68 residues: Amphipathic peptide CT1 (68 aa).

A signal peptide spans 1–23 (MKTQIVILIVAVLFLQLVSQSDA). Leu-36 is modified (leucine amide). Positions 40 to 68 (GLKNLDQYNDLFDGEISDADIKFLKDLMR) are excised as a propeptide.

Belongs to the non-disulfide-bridged peptide (NDBP) superfamily. Short antimicrobial peptide (group 4) family. In terms of tissue distribution, expressed by the venom gland.

Its subcellular location is the secreted. The protein resides in the target cell membrane. Amphipathic peptide that shows no antibacterial activity even at 50 uM but shows a low hemolytic activity against human erythrocytes. The chain is Amphipathic peptide CT1 from Mesomexovis subcristatus (Scorpion).